The sequence spans 690 residues: Signal peptide peptidase-like 2C (690 aa).

The signal sequence occupies residues 1-28; it reads MACLGSLHPLGSLLLLFLLLLLSPEARG. The Lumenal segment spans residues 29–192; the sequence is EYGLVRVVSK…APLEPVTDYN (164 aa). A PA domain is found at 87–166; the sequence is DSSPRQRPLH…AVLRYTDMLD (80 aa). The N-linked (GlcNAc...) asparagine glycan is linked to asparagine 106. The chain crosses the membrane as a helical span at residues 193–213; it reads MAIIFILAVGTVAAGGYWAGL. Over 214-260 the chain is Cytoplasmic; sequence MEANKLQRRQAQRGGGLGGHNQQQTVAAERSQRAWEDDDFEDAPMDF. Residues 261-283 traverse the membrane as a helical segment; sequence TPAMTGAVVTMSCSIMILLYFFY. Residue aspartate 284 is a topological domain, lumenal. A helical transmembrane segment spans residues 285-307; sequence CFVYVMIGIFSLGASTGLYSCLA. At 308 to 328 the chain is on the cytoplasmic side; the sequence is PILCHLPLWRYQWVLPGQRVS. Residues 329-349 traverse the membrane as a helical segment; it reads VTWPLLLLAGLCAMVTVLWVI. The Lumenal segment spans residues 350 to 354; it reads HRNED. The chain crosses the membrane as a helical span at residues 355 to 373; that stretch reads HWAWLLQDTLGVAYCLFVL. Over 374-384 the chain is Cytoplasmic; that stretch reads RRVRLPTFKNC. A helical transmembrane segment spans residues 385-405; that stretch reads TLFLLALLAFDVFFVFITPLF. Aspartate 395 is a catalytic residue. Residues 406 to 448 lie on the Lumenal side of the membrane; it reads TKTGESIMVEVASGPADSSSHERLPMVLKVPRLSFSALTLCNQ. A helical transmembrane segment spans residues 449 to 469; that stretch reads PFSILGFGDIVVPGFLVAYCH. The active site involves aspartate 457. At 470–482 the chain is on the cytoplasmic side; the sequence is RFDMQVQSRQVYY. A helical membrane pass occupies residues 483-503; the sequence is MACTVAYAVGLLVTFVAMILM. A topological domain (lumenal) is located at residue glutamine 504. Residues 505-525 traverse the membrane as a helical segment; that stretch reads MGQPALLYLVSSTLLTSLAVA. The PAL motif lies at 508-510; sequence PAL. The Cytoplasmic segment spans residues 526–690; sequence TCRQEFTLFW…KKSMSAQAPL (165 aa). Residues 564–573 show a composition bias toward basic and acidic residues; that stretch reads EDAKDSRTTN. A disordered region spans residues 564 to 633; it reads EDAKDSRTTN…DPNELPSGSP (70 aa). A compositionally biased stretch (polar residues) spans 615 to 624; sequence SEGWSDTNLD.

Belongs to the peptidase A22B family. Interacts (via active sites) with FREY; the interaction stabilizes FREY1 protein and inhibits SPPL2C proteolytic activity. Post-translationally, glycosylated. In terms of tissue distribution, highly expressed in testis where it is primarily localised in spermatids (at protein level).

It is found in the endoplasmic reticulum membrane. Sperm-specific intramembrane-cleaving aspartic protease (I-CLiP) that cleaves distinct tail-anchored proteins and SNARE proteins. In elongated spermatids, modulates intracellular Ca(2+) homeostasis by controlling PLN abundance through proteolytic cleavage. During spermatogenesis, processes SNARE proteins and impacts vesicular trafficking which supports compartmental reorganization in maturating spermatids and may play a role in formation of the acrosome. Its function is as follows. In round spermatids, acts as a scaffold protein supporting FREY1 in IZUMO1 recruitment at the endoplasmic reticulum membrane and coordination of IZUMO1 complex assembly. Stabilizes FREY1 at the endoplasmic reticulum membrane through interaction. May recruit IZUMO1 interaction partners. Functionally, no difference in cleavage specificity compared to isoform 1. In Mus musculus (Mouse), this protein is Signal peptide peptidase-like 2C.